A 100-amino-acid chain; its full sequence is Large ribosomal subunit protein uL23 (100 aa).

This sequence belongs to the universal ribosomal protein uL23 family. As to quaternary structure, part of the 50S ribosomal subunit. Contacts protein L29, and trigger factor when it is bound to the ribosome.

One of the early assembly proteins it binds 23S rRNA. One of the proteins that surrounds the polypeptide exit tunnel on the outside of the ribosome. Forms the main docking site for trigger factor binding to the ribosome. This Bradyrhizobium diazoefficiens (strain JCM 10833 / BCRC 13528 / IAM 13628 / NBRC 14792 / USDA 110) protein is Large ribosomal subunit protein uL23.